A 246-amino-acid chain; its full sequence is Phosphomannomutase 2 (246 aa).

At A2 the chain carries N-acetylalanine. The active-site Nucleophile is the D12. Mg(2+) is bound by residues D12 and D14. D14 (proton donor/acceptor) is an active-site residue. Alpha-D-mannose 1-phosphate-binding residues include R21, R123, R134, and R141. K149 is subject to N6-acetyllysine. Residues S179 and D181 each coordinate alpha-D-mannose 1-phosphate. Mg(2+)-binding residues include D209, F221, D223, and T226.

The protein belongs to the eukaryotic PMM family. As to quaternary structure, homodimer.

The protein resides in the cytoplasm. It carries out the reaction alpha-D-mannose 1-phosphate = D-mannose 6-phosphate. The protein operates within nucleotide-sugar biosynthesis; GDP-alpha-D-mannose biosynthesis; alpha-D-mannose 1-phosphate from D-fructose 6-phosphate: step 2/2. Functionally, involved in the synthesis of the GDP-mannose and dolichol-phosphate-mannose required for a number of critical mannosyl transfer reactions. This Homo sapiens (Human) protein is Phosphomannomutase 2 (PMM2).